A 541-amino-acid chain; its full sequence is Carotenoid 9,10(9',10')-cleavage dioxygenase 1 (541 aa).

Fe cation-binding residues include His222, His270, His336, and His526.

Belongs to the carotenoid oxygenase family. It depends on Fe(2+) as a cofactor.

The catalysed reaction is all-trans-zeaxanthin + 2 O2 = 4,9-dimethyldodeca-2,4,6,8,10-pentaenedial + 2 (3R)-hydroxy-beta-ionone. Functionally, cleaves a variety of carotenoids at the 9-10 and 9'-10' double bonds. Probably not involved in abscisic acid biosynthesis. This chain is Carotenoid 9,10(9',10')-cleavage dioxygenase 1 (CCD1), found in Pisum sativum (Garden pea).